The following is a 212-amino-acid chain: Orotate phosphoribosyltransferase (212 aa).

Lysine 26 is a binding site for 5-phospho-alpha-D-ribose 1-diphosphate. 34–35 (FF) lines the orotate pocket. 5-phospho-alpha-D-ribose 1-diphosphate contacts are provided by residues 72–73 (YK), arginine 98, lysine 99, lysine 102, histidine 104, and 123–131 (DDVISAGTS). Serine 127 and arginine 155 together coordinate orotate.

It belongs to the purine/pyrimidine phosphoribosyltransferase family. PyrE subfamily. In terms of assembly, homodimer. Requires Mg(2+) as cofactor.

The enzyme catalyses orotidine 5'-phosphate + diphosphate = orotate + 5-phospho-alpha-D-ribose 1-diphosphate. It functions in the pathway pyrimidine metabolism; UMP biosynthesis via de novo pathway; UMP from orotate: step 1/2. Its function is as follows. Catalyzes the transfer of a ribosyl phosphate group from 5-phosphoribose 1-diphosphate to orotate, leading to the formation of orotidine monophosphate (OMP). The polypeptide is Orotate phosphoribosyltransferase (Thiobacillus denitrificans (strain ATCC 25259 / T1)).